The chain runs to 324 residues: Histidine N-acetyltransferase (324 aa).

Residues 15-151 (FEFVLAAEKE…GILLLSFNAP (137 aa)) enclose the N-acetyltransferase domain.

It carries out the reaction L-histidine + acetyl-CoA = N(alpha)-acetyl-L-histidine + CoA + H(+). Functionally, enzyme responsible for the N-acetyl-histidine (NAH) synthesis, which is a major constituent of brain and lens of ectothermic vertebrates. The protein is Histidine N-acetyltransferase (hisat) of Xenopus tropicalis (Western clawed frog).